Here is a 154-residue protein sequence, read N- to C-terminus: Superoxide dismutase [Cu-Zn] (154 aa).

Cu cation is bound by residues H47, H49, and H64. C58 and C147 are disulfide-bonded. Zn(2+)-binding residues include H64, H72, H81, and D84. H121 is a Cu cation binding site. Basic and acidic residues predominate over residues 125-137; sequence DDLGRGGNEESKK. The segment at 125-147 is disordered; that stretch reads DDLGRGGNEESKKTGNAGPRPAC. R144 serves as a coordination point for substrate.

Belongs to the Cu-Zn superoxide dismutase family. As to quaternary structure, homodimer. It depends on Cu cation as a cofactor. Zn(2+) serves as cofactor.

It is found in the cytoplasm. It catalyses the reaction 2 superoxide + 2 H(+) = H2O2 + O2. Its function is as follows. Destroys radicals which are normally produced within the cells and which are toxic to biological systems. This Aspergillus niger (strain ATCC MYA-4892 / CBS 513.88 / FGSC A1513) protein is Superoxide dismutase [Cu-Zn].